Consider the following 43-residue polypeptide: Protein PsbN (43 aa).

The helical transmembrane segment at 5-27 (TLVAISISGSLVSFTGYALYTAF) threads the bilayer.

This sequence belongs to the PsbN family.

Its subcellular location is the plastid. It is found in the chloroplast thylakoid membrane. May play a role in photosystem I and II biogenesis. The polypeptide is Protein PsbN (Drimys granadensis).